The sequence spans 109 residues: Cell division protein FtsL (109 aa).

Residues 1 to 3 (MSR) lie on the Cytoplasmic side of the membrane. The chain crosses the membrane as a helical span at residues 4 to 21 (LNIFLLIIVMGCALSVVN). Topologically, residues 22 to 109 (STNQQRQIFI…ASAAPTGGAR (88 aa)) are periplasmic.

It belongs to the FtsL family. As to quaternary structure, part of a complex composed of FtsB, FtsL and FtsQ.

It is found in the cell inner membrane. Essential cell division protein. May link together the upstream cell division proteins, which are predominantly cytoplasmic, with the downstream cell division proteins, which are predominantly periplasmic. This Burkholderia pseudomallei (strain K96243) protein is Cell division protein FtsL.